The following is a 93-amino-acid chain: MDFWLVCYDVRDDKRRRKLAKLLEQRCQRVQYSVFECPLPEKVLTDLLHRRWLKELNLKEDSLRAYPLQRQSRSQAKIFGSPDLYEPPDFLIL.

Asp-9 lines the Mg(2+) pocket.

This sequence belongs to the CRISPR-associated endoribonuclease Cas2 protein family. Homodimer, forms a heterotetramer with a Cas1 homodimer. It depends on Mg(2+) as a cofactor.

CRISPR (clustered regularly interspaced short palindromic repeat), is an adaptive immune system that provides protection against mobile genetic elements (viruses, transposable elements and conjugative plasmids). CRISPR clusters contain sequences complementary to antecedent mobile elements and target invading nucleic acids. CRISPR clusters are transcribed and processed into CRISPR RNA (crRNA). Functions as a ssRNA-specific endoribonuclease. Involved in the integration of spacer DNA into the CRISPR cassette. The protein is CRISPR-associated endoribonuclease Cas2 2 of Synechocystis sp. (strain ATCC 27184 / PCC 6803 / Kazusa).